A 232-amino-acid polypeptide reads, in one-letter code: Methylthioribulose-1-phosphate dehydratase (232 aa).

C91 provides a ligand contact to substrate. 3 residues coordinate Zn(2+): H109, H111, and H191.

Belongs to the aldolase class II family. MtnB subfamily. It depends on Zn(2+) as a cofactor.

Its subcellular location is the cytoplasm. It carries out the reaction 5-(methylsulfanyl)-D-ribulose 1-phosphate = 5-methylsulfanyl-2,3-dioxopentyl phosphate + H2O. It participates in amino-acid biosynthesis; L-methionine biosynthesis via salvage pathway; L-methionine from S-methyl-5-thio-alpha-D-ribose 1-phosphate: step 2/6. In terms of biological role, catalyzes the dehydration of methylthioribulose-1-phosphate (MTRu-1-P) into 2,3-diketo-5-methylthiopentyl-1-phosphate (DK-MTP-1-P). The chain is Methylthioribulose-1-phosphate dehydratase from Schizosaccharomyces japonicus (strain yFS275 / FY16936) (Fission yeast).